The following is a 680-amino-acid chain: DNA-directed RNA polymerase subunit beta' (680 aa).

The Zn(2+) site is built by C69, C71, C87, and C90. Mg(2+) contacts are provided by D489, D491, and D493.

The protein belongs to the RNA polymerase beta' chain family. RpoC1 subfamily. As to quaternary structure, in plastids the minimal PEP RNA polymerase catalytic core is composed of four subunits: alpha, beta, beta', and beta''. When a (nuclear-encoded) sigma factor is associated with the core the holoenzyme is formed, which can initiate transcription. Mg(2+) is required as a cofactor. It depends on Zn(2+) as a cofactor.

The protein localises to the plastid. The protein resides in the chloroplast. The enzyme catalyses RNA(n) + a ribonucleoside 5'-triphosphate = RNA(n+1) + diphosphate. DNA-dependent RNA polymerase catalyzes the transcription of DNA into RNA using the four ribonucleoside triphosphates as substrates. The sequence is that of DNA-directed RNA polymerase subunit beta' from Aethionema grandiflorum (Persian stone-cress).